The sequence spans 69 residues: Large ribosomal subunit protein uL29 (69 aa).

This sequence belongs to the universal ribosomal protein uL29 family.

The protein is Large ribosomal subunit protein uL29 of Clostridium perfringens (strain ATCC 13124 / DSM 756 / JCM 1290 / NCIMB 6125 / NCTC 8237 / Type A).